The following is a 49-amino-acid chain: Heme exporter protein C (49 aa).

The protein belongs to the CcmC/CycZ/HelC family.

It is found in the cell inner membrane. In terms of biological role, required for the export of heme to the periplasm for the biogenesis of c-type cytochromes. This chain is Heme exporter protein C, found in Rhizobium leguminosarum bv. viciae.